We begin with the raw amino-acid sequence, 302 residues long: Small ribosomal subunit biogenesis GTPase RsgA (302 aa).

Residues 69–229 (KNLLIRPKVA…VGDTPGFSKV (161 aa)) form the CP-type G domain. Residues 118–121 (NKID) and 172–180 (GPSGVGKSS) each bind GTP. The Zn(2+) site is built by cysteine 252, cysteine 257, histidine 259, and cysteine 265.

It belongs to the TRAFAC class YlqF/YawG GTPase family. RsgA subfamily. In terms of assembly, monomer. Associates with 30S ribosomal subunit, binds 16S rRNA. Zn(2+) serves as cofactor.

Its subcellular location is the cytoplasm. Functionally, one of several proteins that assist in the late maturation steps of the functional core of the 30S ribosomal subunit. Helps release RbfA from mature subunits. May play a role in the assembly of ribosomal proteins into the subunit. Circularly permuted GTPase that catalyzes slow GTP hydrolysis, GTPase activity is stimulated by the 30S ribosomal subunit. This chain is Small ribosomal subunit biogenesis GTPase RsgA, found in Aquifex aeolicus (strain VF5).